A 128-amino-acid chain; its full sequence is Glycine cleavage system H protein (128 aa).

Residues 22–104 (AIVVGITDFA…YEEGWMITIE (83 aa)) enclose the Lipoyl-binding domain. Position 63 is an N6-lipoyllysine (Lys-63).

The protein belongs to the GcvH family. In terms of assembly, the glycine cleavage system is composed of four proteins: P, T, L and H. (R)-lipoate is required as a cofactor.

Functionally, the glycine cleavage system catalyzes the degradation of glycine. The H protein shuttles the methylamine group of glycine from the P protein to the T protein. The chain is Glycine cleavage system H protein from Anaeromyxobacter dehalogenans (strain 2CP-1 / ATCC BAA-258).